The following is a 169-amino-acid chain: Myosin regulatory light chain 11 (169 aa).

Position 2 is a n,N,N-trimethylalanine (alanine 2). Serine 15 and serine 16 each carry phosphoserine. Phosphothreonine occurs at positions 25 and 35. The region spanning 25 to 60 (TQIQEFKEAFTVIDQNRDGIIDKEDLRDTFAAMGRL) is the EF-hand 1 domain. Ca(2+) contacts are provided by aspartate 38, asparagine 40, aspartate 42, and aspartate 49. Residue serine 75 is modified to Phosphoserine. 2 consecutive EF-hand domains span residues 95–130 (DPED…QCDR) and 131–166 (FSQE…GDAK). Threonine 101 carries the post-translational modification Phosphothreonine.

As to quaternary structure, myosin is a hexamer of 2 heavy chains and 4 light chains.

Functionally, myosin regulatory subunit that plays an essential role to maintain muscle integrity during early development. Plays a role in regulation of muscle contraction. The polypeptide is Myosin regulatory light chain 11 (Myl11) (Mus musculus (Mouse)).